The sequence spans 308 residues: D-2-hydroxyacid dehydrogenase (308 aa).

NAD(+) contacts are provided by residues T145–L146, V224–R226, and D250. Residue R226 is part of the active site. Residue E255 is part of the active site. H274 serves as the catalytic Proton donor. H274–A277 provides a ligand contact to NAD(+).

The protein belongs to the D-isomer specific 2-hydroxyacid dehydrogenase family. Homotetramer.

In terms of biological role, catalyzes the stereospecific NAD(P)H-dependent reduction of 2-ketocarboxylic acids into the corresponding D-2-hydroxycarboxylic acids. Can use both NADPH or NADH as reductant, displaying a marked preference for NADPH over NADH. Shows a broad substrate specificity, although it displays a marked preference for the 2-ketocarboxylic acids having an unbranched chain of 4-5 carbon atoms. This chain is D-2-hydroxyacid dehydrogenase (ddh), found in Haloferax mediterranei (strain ATCC 33500 / DSM 1411 / JCM 8866 / NBRC 14739 / NCIMB 2177 / R-4) (Halobacterium mediterranei).